Reading from the N-terminus, the 319-residue chain is Methionyl-tRNA formyltransferase (319 aa).

116–119 contributes to the (6S)-5,6,7,8-tetrahydrofolate binding site; sequence SLLP.

The protein belongs to the Fmt family.

It catalyses the reaction L-methionyl-tRNA(fMet) + (6R)-10-formyltetrahydrofolate = N-formyl-L-methionyl-tRNA(fMet) + (6S)-5,6,7,8-tetrahydrofolate + H(+). In terms of biological role, attaches a formyl group to the free amino group of methionyl-tRNA(fMet). The formyl group appears to play a dual role in the initiator identity of N-formylmethionyl-tRNA by promoting its recognition by IF2 and preventing the misappropriation of this tRNA by the elongation apparatus. This Treponema pallidum (strain Nichols) protein is Methionyl-tRNA formyltransferase.